Consider the following 376-residue polypeptide: MSSVSGVRTPRERRSALRSLLRKRRQRELASKVASTVNGATSANNHGEPPSPADARPRLTLHDLHDIFREHPELELKYLNMMKMAITGKESICLPFNFHSHRQHTCLDISPYGNEQVSRIACTSCEDNRILPTASDAMVAFINQTSNIMKNRNFYYGFCKSSELLKLSTNQPPIFQIYYLLHAANHDIVPFMHAENGRLHMHVIFENSDVHIPCDCITQMLTAAREDYSVTLNIVRDHVVISVLCHAVSASSVKIDVTILQRKIDEMDIPNDVSESFERYKELIQELCQSSGNNLYEEATSSYAIRSPLTASPLHVVSTNGCGPSSSSQSTPPHLHPPSQATQPHHYSHHQSQSQQHHHRPQSPPPPLFLNSIRAP.

Phosphoserine is present on S19. The segment at 22–57 (RKRRQRELASKVASTVNGATSANNHGEPPSPADARP) is disordered. Over residues 33–45 (VASTVNGATSANN) the composition is skewed to polar residues. A CCCH-type zinc finger spans residues 106–211 (CLDISPYGNE…HVIFENSDVH (106 aa)). Residues 316–376 (VVSTNGCGPS…PLFLNSIRAP (61 aa)) are disordered. Positions 317–332 (VSTNGCGPSSSSQSTP) are enriched in polar residues.

Belongs to the herpesviridae NEC1 protein family. As to quaternary structure, forms a heterohexameric complex with NEC2. Interacts with capsid vertex specific component 2/CVC2; this interaction directs the capsid to the host inner nuclear membrane to initiate budding. Phosphorylated at serine residues in the N-terminus. This phosphorylation regulates the localization within the inner nuclear membrane. Phosphorylation by viral kinase UL97 at Ser-19 plays an important role for correct viral nuclear egress complex (NEC) localization.

Its subcellular location is the host nucleus inner membrane. Plays an essential role in virion nuclear egress, the first step of virion release from infected cell. Within the host nucleus, NEC1 interacts with the newly formed capsid through the vertexes and directs it to the inner nuclear membrane by associating with NEC2. Induces the budding of the capsid at the inner nuclear membrane as well as its envelopment into the perinuclear space. There, the NEC1/NEC2 complex promotes the fusion of the enveloped capsid with the outer nuclear membrane and the subsequent release of the viral capsid into the cytoplasm where it will reach the secondary budding sites in the host Golgi or trans-Golgi network. This Homo sapiens (Human) protein is Nuclear egress protein 1.